The primary structure comprises 438 residues: 26S proteasome regulatory subunit 6A (438 aa).

Positions 1–24 (MSTLEELDALDQSQQGGSSNNEGL) are disordered. Positions 11–22 (DQSQQGGSSNNE) are enriched in polar residues. Position 226–233 (226–233 (GPPGTGKT)) interacts with ATP.

This sequence belongs to the AAA ATPase family.

It is found in the cytoplasm. Its subcellular location is the nucleus. The 26S proteasome is involved in the ATP-dependent degradation of ubiquitinated proteins. The regulatory (or ATPase) complex confers ATP dependency and substrate specificity to the 26S complex. In Schizosaccharomyces pombe (strain 972 / ATCC 24843) (Fission yeast), this protein is 26S proteasome regulatory subunit 6A (tbp1).